A 413-amino-acid chain; its full sequence is Multidrug resistance protein MdtM (413 aa).

The Cytoplasmic portion of the chain corresponds to 1-14; the sequence is MQRIIQFFSQRATT. A helical transmembrane segment spans residues 15–35; that stretch reads LFFPMALILYDFAAYLTTDLI. At 36–51 the chain is on the periplasmic side; sequence QPGIINVVRDFNADVS. The helical transmembrane segment at 52-72 threads the bilayer; the sequence is LAPASVSLYLAGGMALQWLLG. Residues 73 to 81 are Cytoplasmic-facing; the sequence is PLSDRIGRR. A helical membrane pass occupies residues 82–102; it reads PVLIAGALIFTLACAATLLTT. The Periplasmic segment spans residues 103 to 106; sequence SMTQ. The chain crosses the membrane as a helical span at residues 107-127; that stretch reads FLVARFVQGTSICFIATVGYV. At 128-140 the chain is on the cytoplasmic side; sequence TVQEAFGQTKAIK. The helical transmembrane segment at 141 to 161 threads the bilayer; that stretch reads LMAIITSIVLVAPVIGPLSGA. Topologically, residues 162–170 are periplasmic; that stretch reads ALMHFVHWK. A helical transmembrane segment spans residues 171 to 191; sequence VLFGIIAVMGLLALCGLLLAM. At 192–225 the chain is on the cytoplasmic side; it reads PETVQRGAVPFSAVSVLRDFRNVFRNPIFLTGAA. A helical membrane pass occupies residues 226 to 246; that stretch reads TLSLSYIPMMSWVAVSPVILI. The Periplasmic segment spans residues 247–254; that stretch reads DAGGMSTS. A helical transmembrane segment spans residues 255 to 275; the sequence is QFAWAQVPVFGAVIVANMIVV. The Cytoplasmic portion of the chain corresponds to 276–289; it reads RLVKDPTRPRFIWR. 2 helical membrane passes run 290 to 310 and 311 to 331; these read AVPIQLSGLATLLLGNLLLPH and VWLWSVLGTSLYAFGIGMIFP. Over 332–351 the chain is Cytoplasmic; that stretch reads TLFRFTLFSNNLPKGTVSAS. Residues 352–372 traverse the membrane as a helical segment; the sequence is LNMVILTVMAVSVEVGRWLWF. Residues 373–376 lie on the Periplasmic side of the membrane; it reads HGGR. Residues 377-397 traverse the membrane as a helical segment; that stretch reads LPFHLLAAVAGVIVVFTLATL. Topologically, residues 398–413 are cytoplasmic; the sequence is LQRVRQHEAAELAAEK.

The protein belongs to the major facilitator superfamily.

The protein localises to the cell inner membrane. Functionally, proton-dependent efflux pump. Confers resistance to a broad spectrum of chemically unrelated substrates. The protein is Multidrug resistance protein MdtM (mdtM) of Salmonella typhimurium (strain LT2 / SGSC1412 / ATCC 700720).